The following is an 86-amino-acid chain: Putative defensin-like protein 211 (86 aa).

A signal peptide spans 1-19 (MNTIVLFLTLLILVSSCTS). 3 disulfide bridges follow: cysteine 55-cysteine 72, cysteine 58-cysteine 77, and cysteine 62-cysteine 79.

Belongs to the DEFL family.

Its subcellular location is the secreted. The chain is Putative defensin-like protein 211 from Arabidopsis thaliana (Mouse-ear cress).